Reading from the N-terminus, the 161-residue chain is Urease accessory protein UreE (161 aa).

Positions 133 to 161 (EPEAGAYQSAPHSHSHAHDHPFVRLPAHS) are disordered.

The protein belongs to the UreE family.

The protein localises to the cytoplasm. In terms of biological role, involved in urease metallocenter assembly. Binds nickel. Probably functions as a nickel donor during metallocenter assembly. This Pseudomonas putida (strain W619) protein is Urease accessory protein UreE.